The primary structure comprises 777 residues: Subtilisin-like protease SBT1.4 (777 aa).

The N-terminal stretch at 1-25 is a signal peptide; it reads MAKLSLSSIFFVFPLLLCFFSPSSS. Residues 26-110 constitute a propeptide, activation peptide; the sequence is SSDGLESYIV…VIPDQAREIH (85 aa). Residues 32-110 form the Inhibitor I9 domain; sequence SYIVHVQRSH…VIPDQAREIH (79 aa). Positions 115–614 constitute a Peptidase S8 domain; that stretch reads PAFLGFSQNS…AGHVDPNKAL (500 aa). Asp-142 serves as the catalytic Charge relay system. Residue Asn-198 is glycosylated (N-linked (GlcNAc...) asparagine). The tract at residues 199-223 is disordered; the sequence is GTKKHAAKESRSPRDTEGHGTHTAS. The segment covering 205–218 has biased composition (basic and acidic residues); it reads AKESRSPRDTEGHG. Catalysis depends on His-217, which acts as the Charge relay system. Residues Asn-232 and Asn-395 are each glycosylated (N-linked (GlcNAc...) asparagine). Positions 376–461 constitute a PA domain; it reads LSLVYSGDCG…VGAKAGDQIR (86 aa). Ser-546 acts as the Charge relay system in catalysis.

The protein belongs to the peptidase S8 family.

It is found in the secreted. This Arabidopsis thaliana (Mouse-ear cress) protein is Subtilisin-like protease SBT1.4.